We begin with the raw amino-acid sequence, 259 residues long: Imidazole glycerol phosphate synthase subunit HisF (259 aa).

Catalysis depends on residues aspartate 11 and aspartate 130.

Belongs to the HisA/HisF family. In terms of assembly, heterodimer of HisH and HisF.

It localises to the cytoplasm. It catalyses the reaction 5-[(5-phospho-1-deoxy-D-ribulos-1-ylimino)methylamino]-1-(5-phospho-beta-D-ribosyl)imidazole-4-carboxamide + L-glutamine = D-erythro-1-(imidazol-4-yl)glycerol 3-phosphate + 5-amino-1-(5-phospho-beta-D-ribosyl)imidazole-4-carboxamide + L-glutamate + H(+). Its pathway is amino-acid biosynthesis; L-histidine biosynthesis; L-histidine from 5-phospho-alpha-D-ribose 1-diphosphate: step 5/9. Its function is as follows. IGPS catalyzes the conversion of PRFAR and glutamine to IGP, AICAR and glutamate. The HisF subunit catalyzes the cyclization activity that produces IGP and AICAR from PRFAR using the ammonia provided by the HisH subunit. The protein is Imidazole glycerol phosphate synthase subunit HisF of Carboxydothermus hydrogenoformans (strain ATCC BAA-161 / DSM 6008 / Z-2901).